The following is a 165-amino-acid chain: Large ribosomal subunit protein uL10 (165 aa).

The protein belongs to the universal ribosomal protein uL10 family. Part of the ribosomal stalk of the 50S ribosomal subunit. The N-terminus interacts with L11 and the large rRNA to form the base of the stalk. The C-terminus forms an elongated spine to which L12 dimers bind in a sequential fashion forming a multimeric L10(L12)X complex.

Forms part of the ribosomal stalk, playing a central role in the interaction of the ribosome with GTP-bound translation factors. This is Large ribosomal subunit protein uL10 from Burkholderia ambifaria (strain MC40-6).